We begin with the raw amino-acid sequence, 52 residues long: Rubredoxin (52 aa).

A Rubredoxin-like domain is found at 1–51; that stretch reads MDKYECSICGYIYDEAEGDDGNVAAGTKFADLPADWVCPTCGADKDAFVKM. Positions 6, 9, 38, and 41 each coordinate Fe cation.

It belongs to the rubredoxin family. Fe(3+) serves as cofactor.

Its function is as follows. Rubredoxin is a small nonheme, iron protein lacking acid-labile sulfide. Its single Fe, chelated to 4 Cys, functions as an electron acceptor and may also stabilize the conformation of the molecule. In Megasphaera elsdenii, this protein is Rubredoxin.